The chain runs to 1008 residues: MSFYNPYLVKRTFLKKAAPSRPTKEYTRIIPKCFKTPGAAGVVPHTSTLDPVCFVGDKETPILYGDGSRSLWSAGGRGGPGTGAGQGHTPVALTFHVYDIIETVYGQDRCDHVPFQFQTDIIPSGTVLKLLGRTSDDRSVCVNVFRQELYFYVRVPEGLKLDFLIQQCSRENFNFSQGRYRYEKTSKRVLREYCVEAREVYRVFASSQGFVDLLAGGLTAAGCEVFETNVDAARRFIIDNGFSTFGWYSCAAAVPRQGGAARDSWTELEYDCAAGDLEFHAGRADWPGYNVLSFDIECLGENGFPNASRDEDMILQISCVIWKAGSGEAPRSVLLNLGTCEEIEGVEVYQCPSELDLLYLFFTMIRDADVEFVTGYNISNFDFPYVIDRATQVYNLNLKEFTRVRSSSIFEVHKPKNSSAGFMRAVSKVKVAGVVPIDMYQVCRDKLSLSNYKLDTVAGECVGAKKEDVSYKEIPHLFRQGPGGRARLGLYCVKDSALVLDLLRYFMTHVEISEIAKIAKIPTRRVLTDGQQIRVFSCLLDVAGREGYILPVDRHADAEGYQGATVIDPSPGFYNTPVLVVDFASLYPTIIQAHNLCYSTMIPGDRLCLHPHLGPGDYETFELASGPVHFVKKHKAVSLLATLLNVWLAKRKAIRRELATVSDEAVRTILDKQQLAIKVTCNAVYGFTGVASGILPCLKIAETVTFQGRRMLENSKRYIEGVTPEGLADILGRRVECAPDASFKVIYGDTDSLFIHCRGYRPEQVTGFCDELAAHMTRTLFVDPIKLEAEKTFKCLILLTKKRYIGMMTTDRLLMKGVDLVRKTACRFVQETTKAILDLVMGDEAVRAAAERLCAMRVEEVCARGPPVGFLKVVDILNDSYRKLRLNRVPVGQLSFSTELSRPISYYKTLTLPHLVVYHKIMQRNEELPQIHDRIAYVFVQSPKGKLRSEMAEDPAYAAQHNIPPAVDLYFDKVIHGAANILQCLFENDSDKAARVLYNFADLPPDDL.

Belongs to the DNA polymerase type-B family.

Its subcellular location is the host nucleus. The enzyme catalyses DNA(n) + a 2'-deoxyribonucleoside 5'-triphosphate = DNA(n+1) + diphosphate. In Equine herpesvirus 2 (strain 86/87) (EHV-2), this protein is DNA polymerase catalytic subunit (9).